The sequence spans 48 residues: Large ribosomal subunit protein bL32 (48 aa).

The span at 1–20 shows a compositional bias: basic residues; sequence MAVPKRRVSKTRAAKRRTHY. The disordered stretch occupies residues 1-48; the sequence is MAVPKRRVSKTRAAKRRTHYKVSLPMPIKDKDGSYKMPHRANPTTKEY.

Belongs to the bacterial ribosomal protein bL32 family.

In Campylobacter jejuni subsp. jejuni serotype O:2 (strain ATCC 700819 / NCTC 11168), this protein is Large ribosomal subunit protein bL32 (rpmF).